Consider the following 173-residue polypeptide: Succinate dehydrogenase assembly factor 3, mitochondrial (173 aa).

A mitochondrion-targeting transit peptide spans 1–59; that stretch reads MFRPSTSLALRSTLRQLASASNQPIPPGSEINAVKRTVATILPPIRLYRRIIRAHRRLD. Residues 149–173 form a disordered region; it reads FPPEKQRELAEKAAADAGLSVKKDE. Residues 152 to 162 are compositionally biased toward basic and acidic residues; that stretch reads EKQRELAEKAA.

It belongs to the complex I LYR family. SDHAF3 subfamily. In terms of assembly, interacts with the iron-sulfur protein subunit within the SDH catalytic dimer.

The protein localises to the mitochondrion matrix. Plays an essential role in the assembly of succinate dehydrogenase (SDH), an enzyme complex (also referred to as respiratory complex II) that is a component of both the tricarboxylic acid (TCA) cycle and the mitochondrial electron transport chain, and which couples the oxidation of succinate to fumarate with the reduction of ubiquinone (coenzyme Q) to ubiquinol. Promotes maturation of the iron-sulfur protein subunit of the SDH catalytic dimer, protecting it from the deleterious effects of oxidants. May act together with SDHAF1. This chain is Succinate dehydrogenase assembly factor 3, mitochondrial, found in Mycosarcoma maydis (Corn smut fungus).